A 398-amino-acid chain; its full sequence is Elongation factor Tu (398 aa).

One can recognise a tr-type G domain in the interval Lys10–Thr208. Positions Gly19–Thr26 are G1. Gly19–Thr26 provides a ligand contact to GTP. Thr26 is a binding site for Mg(2+). The interval Thr60–Thr64 is G2. The G3 stretch occupies residues Asp83–Gly86. GTP contacts are provided by residues Asp83–His87 and Asn138–Asp141. Positions Asn138–Asp141 are G4. The tract at residues Ser176–Leu178 is G5.

This sequence belongs to the TRAFAC class translation factor GTPase superfamily. Classic translation factor GTPase family. EF-Tu/EF-1A subfamily. As to quaternary structure, monomer.

Its subcellular location is the cytoplasm. The catalysed reaction is GTP + H2O = GDP + phosphate + H(+). In terms of biological role, GTP hydrolase that promotes the GTP-dependent binding of aminoacyl-tRNA to the A-site of ribosomes during protein biosynthesis. The protein is Elongation factor Tu of Rhodopirellula baltica (strain DSM 10527 / NCIMB 13988 / SH1).